Reading from the N-terminus, the 138-residue chain is uncharacterized protein (138 aa).

The tract at residues 1 to 27 (MEGELIENNGLDIYDTSETPKKRGRPA) is disordered.

This is an uncharacterized protein from Escherichia coli (strain K12).